We begin with the raw amino-acid sequence, 460 residues long: Tol-Pal system protein TolB (460 aa).

The signal sequence occupies residues 1–22 (MTIFQKSFILLIIWNFSLFAFS).

The protein belongs to the TolB family. In terms of assembly, the Tol-Pal system is composed of five core proteins: the inner membrane proteins TolA, TolQ and TolR, the periplasmic protein TolB and the outer membrane protein Pal. They form a network linking the inner and outer membranes and the peptidoglycan layer.

It localises to the periplasm. Functionally, part of the Tol-Pal system, which plays a role in outer membrane invagination during cell division and is important for maintaining outer membrane integrity. TolB occupies a key intermediary position in the Tol-Pal system because it communicates directly with both membrane-embedded components, Pal in the outer membrane and TolA in the inner membrane. The chain is Tol-Pal system protein TolB from Blochmanniella floridana.